Reading from the N-terminus, the 195-residue chain is Guanylate kinase (195 aa).

Positions 7–186 (GVLLVLSSPS…SVEEISSILD (180 aa)) constitute a Guanylate kinase-like domain. Residue 14-21 (SPSGAGKT) coordinates ATP.

Belongs to the guanylate kinase family.

Its subcellular location is the cytoplasm. The catalysed reaction is GMP + ATP = GDP + ADP. In terms of biological role, essential for recycling GMP and indirectly, cGMP. The chain is Guanylate kinase from Wolbachia sp. subsp. Brugia malayi (strain TRS).